The chain runs to 440 residues: FAD-dependent monooxygenase FVEG_08293 (440 aa).

Residues 7 to 26 (EFNVAIVGAGVAGLALAMAL) traverse the membrane as a helical segment. FAD contacts are provided by glutamate 37 and glycine 50. An N-linked (GlcNAc...) asparagine glycan is attached at asparagine 77. Residue arginine 122 coordinates FAD. Residues arginine 203 and tyrosine 235 contribute to the active site. FAD contacts are provided by aspartate 317 and alanine 330.

It belongs to the paxM FAD-dependent monooxygenase family. FAD is required as a cofactor.

The protein resides in the membrane. Functionally, FAD-dependent monooxygenase; part of the Fusarium detoxification of benzoxazolinone cluster 1 (FDB1) involved in the degradation of benzoxazolinones produced by the host plant. Maize, wheat, and rye produce the 2 benzoxazinone phytoanticipins 2,4-dihy-droxy-7-methoxy-1,4-benzoxazin-3-one (DIMBOA) and 2,4-dihydroxy-1,4-benzoxazin-3-one (DIBOA) that, due to their inherent instability once released, spontaneously degrade to the more stable corresponding benzoxazolinones, 6-methoxy-2-benzoxazolinone (MBOA) and 2-benzoxazolinone (BOA), respectively. The first step in the detoxification of benzoxazolinones involves the hydrolysis of the cyclic ester bond of benzoxazolinones by the FDB1 cluster gamma-lactamase MBL1 to aminophenols. MBL1 is able to convert BOA into 2-aminophenol (2-AP), as well as MBOA into 5-methoxy-2-aminophenol (2-AMP). The FDB2 cluster N-malonyltransferase FDB2/NAT1 then metabolizes aminophenols via N-malonylation to non-toxic malonamic acids. FDB2/NAT1 converts 2-AP into N-(2-hydroxyphenyl) malonamic acid (HPMA) and 2-AMP into N-(2-hydroxy-4-methoxyphenyl) malonamic acid (HMPMA). The duplicated dienlactone hydrolases DLH1 and DLH2 may provide redundant function for hydrolyzing the lactone moiety in the BOA molecule. The roles of the amidases an other enzymes encoded by the 2 FDB clusters have not been identified so far. This Gibberella moniliformis (strain M3125 / FGSC 7600) (Maize ear and stalk rot fungus) protein is FAD-dependent monooxygenase FVEG_08293.